The primary structure comprises 42 residues: Mating-type M-specific polypeptide Mi (42 aa).

It is found in the cytoplasm. It localises to the nucleus. In terms of biological role, mating type proteins are sequence specific DNA-binding proteins that act as master switches in yeast differentiation by controlling gene expression in a cell type-specific fashion. Required for meiosis, but plays no role in conjugation. The protein is Mating-type M-specific polypeptide Mi (mat1-Mi) of Schizosaccharomyces pombe (strain 972 / ATCC 24843) (Fission yeast).